The primary structure comprises 350 residues: Protein RecA (350 aa).

ATP is bound at residue 67–74 (GPESSGKT).

This sequence belongs to the RecA family.

Its subcellular location is the cytoplasm. In terms of biological role, can catalyze the hydrolysis of ATP in the presence of single-stranded DNA, the ATP-dependent uptake of single-stranded DNA by duplex DNA, and the ATP-dependent hybridization of homologous single-stranded DNAs. It interacts with LexA causing its activation and leading to its autocatalytic cleavage. This chain is Protein RecA, found in Mycobacterium avium (strain 104).